The following is a 414-amino-acid chain: Serine hydroxymethyltransferase (414 aa).

(6S)-5,6,7,8-tetrahydrofolate-binding positions include Leu121 and Gly125–Leu127. Lys229 is subject to N6-(pyridoxal phosphate)lysine.

Belongs to the SHMT family. As to quaternary structure, homodimer. Pyridoxal 5'-phosphate is required as a cofactor.

Its subcellular location is the cytoplasm. It catalyses the reaction (6R)-5,10-methylene-5,6,7,8-tetrahydrofolate + glycine + H2O = (6S)-5,6,7,8-tetrahydrofolate + L-serine. The protein operates within one-carbon metabolism; tetrahydrofolate interconversion. Its pathway is amino-acid biosynthesis; glycine biosynthesis; glycine from L-serine: step 1/1. Functionally, catalyzes the reversible interconversion of serine and glycine with tetrahydrofolate (THF) serving as the one-carbon carrier. This reaction serves as the major source of one-carbon groups required for the biosynthesis of purines, thymidylate, methionine, and other important biomolecules. Also exhibits THF-independent aldolase activity toward beta-hydroxyamino acids, producing glycine and aldehydes, via a retro-aldol mechanism. This is Serine hydroxymethyltransferase from Paracidovorax citrulli (strain AAC00-1) (Acidovorax citrulli).